A 323-amino-acid chain; its full sequence is Olfactory receptor 4K5 (323 aa).

Residues 1–25 (MDKSNSSVVSEFVLLGLCSSQKLQL) are Extracellular-facing. A glycan (N-linked (GlcNAc...) asparagine) is linked at asparagine 5. The helical transmembrane segment at 26-49 (FYFCFFSVLYTVIVLGNLLIILTV) threads the bilayer. Residues 50 to 57 (TSDTSLHS) are Cytoplasmic-facing. Residues 58–79 (PMYFLLGNLSFVDICQASFATP) form a helical membrane-spanning segment. The Extracellular portion of the chain corresponds to 80–100 (KMIADFLSAHETISFSGCIAQ). Cysteine 97 and cysteine 189 are joined by a disulfide. The chain crosses the membrane as a helical span at residues 101-120 (IFFIHLFTGGEMVLLVSMAY). The Cytoplasmic portion of the chain corresponds to 121–139 (DRYVAICKPLYYVVIMSRR). The helical transmembrane segment at 140–158 (TCTVLVMISWAVSLVHTLS) threads the bilayer. At 159–195 (QLSFTVNLPFCGPNVVDSFFCDLPRVTKLACLDSYII) the chain is on the extracellular side. Residues 196–219 (EILIVVNSGILSLSTFSLLVSSYI) form a helical membrane-spanning segment. The Cytoplasmic portion of the chain corresponds to 220-235 (IILVTVWLKSSAAMAK). A helical transmembrane segment spans residues 236 to 258 (AFSTLASHIAVVILFFGPCIFIY). Topologically, residues 259 to 269 (VWPFTISPLDK) are extracellular. The chain crosses the membrane as a helical span at residues 270-289 (FLAIFYTVFTPVLNPIIYTL). Topologically, residues 290 to 323 (RNRDMKAAVRKIVNHYLRPRRISEMSLVVRTSFH) are cytoplasmic.

It belongs to the G-protein coupled receptor 1 family.

It localises to the cell membrane. In terms of biological role, odorant receptor. The protein is Olfactory receptor 4K5 (OR4K5) of Homo sapiens (Human).